The sequence spans 99 residues: DNA-binding protein Fis (99 aa).

The segment at residues 75-94 is a DNA-binding region (H-T-H motif); it reads QTRAAIMMGINRGTLRKKLK.

The protein belongs to the transcriptional regulatory Fis family. Homodimer.

Activates ribosomal RNA transcription. Plays a direct role in upstream activation of rRNA promoters. This Tolumonas auensis (strain DSM 9187 / NBRC 110442 / TA 4) protein is DNA-binding protein Fis.